We begin with the raw amino-acid sequence, 456 residues long: Sulfoacetaldehyde dehydrogenase (456 aa).

213-218 lines the NAD(+) pocket; the sequence is GGTAAA. Residues Glu-233 and Cys-267 contribute to the active site.

The protein belongs to the aldehyde dehydrogenase family. Homotetramer.

It carries out the reaction sulfoacetaldehyde + NAD(+) + H2O = sulfoacetate + NADH + 2 H(+). Functionally, mediates conversion of 2-sulfoacetaldehyde into sulfoacetate. The enzyme is specific for NAD; NADP is not a substrate. Part of a pathway that can utilize the amino group of taurine as a sole source of nitrogen for growth. The protein is Sulfoacetaldehyde dehydrogenase (safD) of Neptuniibacter caesariensis.